Consider the following 257-residue polypeptide: Acetylglutamate kinase (257 aa).

Residues 43–44, Arg-65, and Asn-157 each bind substrate; that span reads GG. ATP-binding positions include 180-185 and 208-210; these read DVSGIL and IIT.

This sequence belongs to the acetylglutamate kinase family. ArgB subfamily. Homodimer.

It localises to the cytoplasm. The catalysed reaction is N-acetyl-L-glutamate + ATP = N-acetyl-L-glutamyl 5-phosphate + ADP. It functions in the pathway amino-acid biosynthesis; L-arginine biosynthesis; N(2)-acetyl-L-ornithine from L-glutamate: step 2/4. In terms of biological role, catalyzes the ATP-dependent phosphorylation of N-acetyl-L-glutamate. In Escherichia coli O139:H28 (strain E24377A / ETEC), this protein is Acetylglutamate kinase.